Consider the following 510-residue polypeptide: Glutamate--tRNA ligase (510 aa).

The short motif at 15-25 (PSPTGDPHVGT) is the 'HIGH' region element. The short motif at 256–260 (KISKR) is the 'KMSKS' region element. Position 259 (lysine 259) interacts with ATP.

Belongs to the class-I aminoacyl-tRNA synthetase family. Glutamate--tRNA ligase type 1 subfamily. In terms of assembly, monomer.

Its subcellular location is the cytoplasm. It catalyses the reaction tRNA(Glu) + L-glutamate + ATP = L-glutamyl-tRNA(Glu) + AMP + diphosphate. Its function is as follows. Catalyzes the attachment of glutamate to tRNA(Glu) in a two-step reaction: glutamate is first activated by ATP to form Glu-AMP and then transferred to the acceptor end of tRNA(Glu). The chain is Glutamate--tRNA ligase from Fusobacterium nucleatum subsp. nucleatum (strain ATCC 25586 / DSM 15643 / BCRC 10681 / CIP 101130 / JCM 8532 / KCTC 2640 / LMG 13131 / VPI 4355).